The chain runs to 376 residues: Chaperone protein DnaJ (376 aa).

The region spanning aspartate 5–glycine 70 is the J domain. The CR-type zinc-finger motif lies at glycine 131–serine 209. Residues cysteine 144, cysteine 147, cysteine 161, cysteine 164, cysteine 183, cysteine 186, cysteine 197, and cysteine 200 each contribute to the Zn(2+) site. CXXCXGXG motif repeat units follow at residues cysteine 144 to glycine 151, cysteine 161 to glycine 168, cysteine 183 to glycine 190, and cysteine 197 to glycine 204.

The protein belongs to the DnaJ family. As to quaternary structure, homodimer. Zn(2+) serves as cofactor.

It is found in the cytoplasm. In terms of biological role, participates actively in the response to hyperosmotic and heat shock by preventing the aggregation of stress-denatured proteins and by disaggregating proteins, also in an autonomous, DnaK-independent fashion. Unfolded proteins bind initially to DnaJ; upon interaction with the DnaJ-bound protein, DnaK hydrolyzes its bound ATP, resulting in the formation of a stable complex. GrpE releases ADP from DnaK; ATP binding to DnaK triggers the release of the substrate protein, thus completing the reaction cycle. Several rounds of ATP-dependent interactions between DnaJ, DnaK and GrpE are required for fully efficient folding. Also involved, together with DnaK and GrpE, in the DNA replication of plasmids through activation of initiation proteins. In Shigella boydii serotype 18 (strain CDC 3083-94 / BS512), this protein is Chaperone protein DnaJ.